The primary structure comprises 441 residues: Protein disulfide isomerase-like 2-3 (441 aa).

Positions 1 to 18 are cleaved as a signal peptide; it reads MRPAVAAALLLVAAAVAA. 2 consecutive Thioredoxin domains span residues 19–139 and 159–276; these read SPVS…ALLR and SEKT…ANAA. Catalysis depends on nucleophile residues cysteine 59 and cysteine 62. Cysteine 59 and cysteine 62 form a disulfide bridge. The segment at 143–166 is disordered; it reads NGKTSAGSGGKKSGGSSEKTEPSA. Active-site nucleophile residues include cysteine 195 and cysteine 198. Cysteine 195 and cysteine 198 are disulfide-bonded.

It belongs to the protein disulfide isomerase family.

Its subcellular location is the endoplasmic reticulum lumen. The enzyme catalyses Catalyzes the rearrangement of -S-S- bonds in proteins.. Its function is as follows. Acts as a protein-folding catalyst that interacts with nascent polypeptides to catalyze the formation, isomerization, and reduction or oxidation of disulfide bonds. May play a role in storage protein biogenesis. This Oryza sativa subsp. japonica (Rice) protein is Protein disulfide isomerase-like 2-3 (PDIL2-3).